The sequence spans 466 residues: GATA-binding factor 2 (466 aa).

Low complexity-rich tracts occupy residues 139–155 (GSSTSSTASVSSLTPAS) and 174–188 (PDPNSTSAASPSSSA). Positions 139-196 (GSSTSSTASVSSLTPASHSGSHLFGFPPTPPKEVSPDPNSTSAASPSSSAGARQEDKD) are disordered. 2 consecutive GATA-type zinc fingers follow at residues 281-305 (CVNCGATATPLWRRDGTGHYLCNAC) and 335-359 (CANCQTTTTTLWRRNANGDPVCNAC). Residues 436–466 (GHILPTPTPIHPSSSISFGHPHPSSMVTAMG) form a disordered region.

As to expression, expressed in all developmental stages of erythroid cells but is additionally found in a limited subset of other tissues.

The protein resides in the nucleus. Transcriptional activator which probably serves as a general switch factor for cell-specific development. It binds to DNA sites with the consensus sequence 5'-[AT]GATA[AG]-3' within regulatory regions of genes. This is GATA-binding factor 2 (GATA2) from Gallus gallus (Chicken).